Reading from the N-terminus, the 158-residue chain is HVA22-like protein f (158 aa).

3 helical membrane-spanning segments follow: residues 2-22 (GFII…VMLL), 41-61 (QQWL…LSVW), and 63-83 (VLAW…WLVL).

Belongs to the DP1 family.

It localises to the membrane. The sequence is that of HVA22-like protein f (HVA22F) from Arabidopsis thaliana (Mouse-ear cress).